Reading from the N-terminus, the 142-residue chain is Organic hydroperoxide resistance protein-like 2 (142 aa).

The protein belongs to the OsmC/Ohr family.

The sequence is that of Organic hydroperoxide resistance protein-like 2 from Staphylococcus saprophyticus subsp. saprophyticus (strain ATCC 15305 / DSM 20229 / NCIMB 8711 / NCTC 7292 / S-41).